We begin with the raw amino-acid sequence, 275 residues long: Lycopene elongase/hydratase (275 aa).

The next 9 helical transmembrane spans lie at 13-33 (FWLY…TTVG), 38-58 (APAV…LYGI), 84-104 (AAVA…AAPL), 107-127 (EAWP…APPL), 134-154 (VLDS…YAGV), 160-180 (PLLA…FSAI), 203-223 (ALAY…LVDV), 225-245 (FGLL…LQVA), and 253-273 (YPAV…WGVV).

This sequence belongs to the UbiA prenyltransferase family.

The protein localises to the cell membrane. The enzyme catalyses all-trans-lycopene + dimethylallyl diphosphate + H2O = dihydroisopentenyldehydrorhodopin + diphosphate. It catalyses the reaction isopentenyldehydrorhodopin + dimethylallyl diphosphate + H2O = dihydrobisanhydrobacterioruberin + diphosphate. Its pathway is carotenoid biosynthesis. Inhibited by bacterioopsin. Its function is as follows. Involved in the biosynthesis of the acyclic C50 carotenoid bacterioruberin (BR). Acts as a bifunctional elongase/hydratase that catalyzes the elongation of lycopene by attaching a C(5) isoprene unit at C-2, as well as the hydroxylation of the previous end of the molecule. The enzyme acts at both ends of the substrate, and catalyzes the conversion of lycopene to the C(45) intermediate dihydroisopentenyldehydrorhodopin (DH-IDR) and the conversion of isopentenyldehydrorhodopin (IDR) to the C(50) carotenoid dihydrobisanhydrobacterioruberin (DH-BABR). Can also catalyze the conversion of lycopene to tetrahydrobisanhydrobacterioruberin (TH-BABR). This chain is Lycopene elongase/hydratase, found in Halobacterium salinarum (strain ATCC 700922 / JCM 11081 / NRC-1) (Halobacterium halobium).